The following is a 247-amino-acid chain: Carboxy-S-adenosyl-L-methionine synthase (247 aa).

S-adenosyl-L-methionine-binding positions include tyrosine 39, 89–90 (DN), 117–118 (DI), asparagine 132, and arginine 199.

Belongs to the class I-like SAM-binding methyltransferase superfamily. Cx-SAM synthase family. As to quaternary structure, homodimer.

The enzyme catalyses prephenate + S-adenosyl-L-methionine = carboxy-S-adenosyl-L-methionine + 3-phenylpyruvate + H2O. In terms of biological role, catalyzes the conversion of S-adenosyl-L-methionine (SAM) to carboxy-S-adenosyl-L-methionine (Cx-SAM). This Sodalis glossinidius (strain morsitans) protein is Carboxy-S-adenosyl-L-methionine synthase.